We begin with the raw amino-acid sequence, 211 residues long: Uracil phosphoribosyltransferase (211 aa).

5-phospho-alpha-D-ribose 1-diphosphate-binding positions include Arg-78, Arg-103, and Asp-130 to Ser-138. Uracil contacts are provided by residues Ile-193 and Gly-198–Ala-200. Asp-199 is a 5-phospho-alpha-D-ribose 1-diphosphate binding site.

It belongs to the UPRTase family. The cofactor is Mg(2+).

It catalyses the reaction UMP + diphosphate = 5-phospho-alpha-D-ribose 1-diphosphate + uracil. It functions in the pathway pyrimidine metabolism; UMP biosynthesis via salvage pathway; UMP from uracil: step 1/1. Its activity is regulated as follows. Allosterically activated by GTP. In terms of biological role, catalyzes the conversion of uracil and 5-phospho-alpha-D-ribose 1-diphosphate (PRPP) to UMP and diphosphate. In Hahella chejuensis (strain KCTC 2396), this protein is Uracil phosphoribosyltransferase.